Consider the following 370-residue polypeptide: Coproporphyrin III ferrochelatase (370 aa).

The Fe-coproporphyrin III site is built by Ser58 and Tyr127. Positions 189 and 276 each coordinate Fe(2+).

The protein belongs to the ferrochelatase family.

The protein resides in the cytoplasm. It catalyses the reaction Fe-coproporphyrin III + 2 H(+) = coproporphyrin III + Fe(2+). Its pathway is porphyrin-containing compound metabolism; protoheme biosynthesis. Involved in coproporphyrin-dependent heme b biosynthesis. Catalyzes the insertion of ferrous iron into coproporphyrin III to form Fe-coproporphyrin III. The protein is Coproporphyrin III ferrochelatase of Corynebacterium glutamicum (strain ATCC 13032 / DSM 20300 / JCM 1318 / BCRC 11384 / CCUG 27702 / LMG 3730 / NBRC 12168 / NCIMB 10025 / NRRL B-2784 / 534).